The primary structure comprises 456 residues: Protein MGA1 (456 aa).

The DNA-binding element occupies 3–118; sequence PKTFVHQLHA…ILNKIQRKST (116 aa). The interval 229–299 is disordered; sequence SIVQPQQPQQ…QPLPTVPPYS (71 aa). Composition is skewed to low complexity over residues 231–246, 253–267, and 283–299; these read VQPQ…QALS, SGTL…TTSL, and QQQQ…PPYS.

The protein belongs to the HSF family.

Its subcellular location is the nucleus. The polypeptide is Protein MGA1 (MGA1) (Saccharomyces cerevisiae (strain ATCC 204508 / S288c) (Baker's yeast)).